The chain runs to 591 residues: Aspartate--tRNA ligase (591 aa).

Glu171 is an L-aspartate binding site. An aspartate region spans residues Gln195 to Lys198. Arg217 contributes to the L-aspartate binding site. ATP-binding positions include Arg217–Glu219 and Gln226. His448 provides a ligand contact to L-aspartate. Position 482 (Glu482) interacts with ATP. L-aspartate is bound at residue Arg489. Gly534–Arg537 is an ATP binding site.

The protein belongs to the class-II aminoacyl-tRNA synthetase family. Type 1 subfamily. As to quaternary structure, homodimer.

The protein resides in the cytoplasm. It carries out the reaction tRNA(Asp) + L-aspartate + ATP = L-aspartyl-tRNA(Asp) + AMP + diphosphate. Its function is as follows. Catalyzes the attachment of L-aspartate to tRNA(Asp) in a two-step reaction: L-aspartate is first activated by ATP to form Asp-AMP and then transferred to the acceptor end of tRNA(Asp). The protein is Aspartate--tRNA ligase of Edwardsiella ictaluri (strain 93-146).